Reading from the N-terminus, the 465-residue chain is GTPase Der (465 aa).

2 consecutive EngA-type G domains span residues 3–167 (PLVA…PERS) and 179–352 (IHIA…VSAL). GTP-binding positions include 9–16 (GRPNVGKS), 57–61 (DTGGM), 119–122 (NKID), 185–192 (GRPNVGKS), 232–236 (DTAGL), and 297–300 (NKWD). One can recognise a KH-like domain in the interval 353–437 (RQFSTSEVNK…PVRFLFREGD (85 aa)).

It belongs to the TRAFAC class TrmE-Era-EngA-EngB-Septin-like GTPase superfamily. EngA (Der) GTPase family. Associates with the 50S ribosomal subunit.

Functionally, GTPase that plays an essential role in the late steps of ribosome biogenesis. This chain is GTPase Der, found in Xylella fastidiosa (strain M23).